The primary structure comprises 121 residues: MAKGLRCKHRIRMRNIKRQHYAKKDLERLKKIVSKSSELKDVVTMKTTEPIQENKTSEGTSTDGSMEVDKMAKVINKKTLQDENGHYPEWMNQRAVKKQKQKLNKLKIKKKSGKVSKAIKW.

2 disordered regions span residues 44-67 (TMKTTEPIQENKTSEGTSTDGSME) and 95-121 (AVKKQKQKLNKLKIKKKSGKVSKAIKW). Positions 45-64 (MKTTEPIQENKTSEGTSTDG) are enriched in polar residues.

It belongs to the learning-associated protein family. Expressed predominantly in cerebral ganglia (at protein level). The mRNA is highly expressed in cerebral ganglia, and is detected at lower levels in visceral-pedal ganglia, head, and body, but is not detected in the tail.

The protein localises to the cytoplasm. The protein resides in the secreted. Functionally, may be involved in modulating long-term memory formation and retention, at least with respect to odor-taste associative learning. The polypeptide is 18 kDa learning-associated protein of slug (Lehmannia marginata (Tree slug)).